The sequence spans 79 residues: DNA-directed RNA polymerase subunit omega (79 aa).

This sequence belongs to the RNA polymerase subunit omega family. In cyanobacteria the RNAP catalytic core is composed of 2 alpha, 1 beta, 1 beta', 1 gamma and 1 omega subunit. When a sigma factor is associated with the core the holoenzyme is formed, which can initiate transcription.

The catalysed reaction is RNA(n) + a ribonucleoside 5'-triphosphate = RNA(n+1) + diphosphate. Promotes RNA polymerase assembly. Latches the N- and C-terminal regions of the beta' subunit thereby facilitating its interaction with the beta and alpha subunits. The protein is DNA-directed RNA polymerase subunit omega of Synechococcus sp. (strain JA-3-3Ab) (Cyanobacteria bacterium Yellowstone A-Prime).